The chain runs to 529 residues: BAR/IMD domain-containing adapter protein 2-like 2 (529 aa).

An IMD domain is found at 1-239; that stretch reads MAPEMDQFYR…HSPGLLGPAL (239 aa). Disordered stretches follow at residues 221-327 and 403-510; these read EASR…GGAR and TSMS…TNPF. Phosphoserine occurs at positions 231, 272, and 302. The segment covering 299–313 has biased composition (low complexity); the sequence is SASSLYSGSAQSSRS. The SH3 domain occupies 324 to 387; it reads GGARRVRALV…PEAYVKALEE (64 aa). Low complexity-rich tracts occupy residues 403–413 and 452–462; these read TSMSPMTPMNP and RSRTPSRVPSR. Over residues 463-472 the composition is skewed to pro residues; it reads APSPAPPPLP. Phosphoserine occurs at positions 478 and 481.

As to expression, expressed in the epithelial layer of the intestine (at protein level).

It localises to the cell membrane. The protein localises to the cell junction. Its subcellular location is the cytoplasmic vesicle membrane. Its function is as follows. Phosphoinositides-binding protein that induces the formation of planar or gently curved membrane structures. Binds to phosphoinositides, including to phosphatidylinositol 4,5-bisphosphate (PtdIns(4,5)P2) headgroups. There seems to be no clear preference for a specific phosphoinositide. The sequence is that of BAR/IMD domain-containing adapter protein 2-like 2 (BAIAP2L2) from Homo sapiens (Human).